A 284-amino-acid polypeptide reads, in one-letter code: NAD kinase (284 aa).

Aspartate 70 (proton acceptor) is an active-site residue. NAD(+) is bound by residues 70–71 (DG), 139–140 (NE), lysine 167, aspartate 169, leucine 177, 180–185 (TAYNLS), and glutamine 236.

It belongs to the NAD kinase family. A divalent metal cation is required as a cofactor.

The protein resides in the cytoplasm. It catalyses the reaction NAD(+) + ATP = ADP + NADP(+) + H(+). In terms of biological role, involved in the regulation of the intracellular balance of NAD and NADP, and is a key enzyme in the biosynthesis of NADP. Catalyzes specifically the phosphorylation on 2'-hydroxyl of the adenosine moiety of NAD to yield NADP. This is NAD kinase from Helicobacter pylori (strain HPAG1).